The following is a 104-amino-acid chain: MATKIRCTDEVIVLTGKYKGKRGIVIAIYSLGKAIVSGINIVKKHQKPVPALNKTGGIIEKESVIHISNLTIFNTKMNQADRVSFKTINGKKVRVFKSNGQTIN.

This sequence belongs to the universal ribosomal protein uL24 family. As to quaternary structure, part of the 50S ribosomal subunit.

Its function is as follows. One of two assembly initiator proteins, it binds directly to the 5'-end of the 23S rRNA, where it nucleates assembly of the 50S subunit. In terms of biological role, one of the proteins that surrounds the polypeptide exit tunnel on the outside of the subunit. The sequence is that of Large ribosomal subunit protein uL24 from Baumannia cicadellinicola subsp. Homalodisca coagulata.